The sequence spans 133 residues: Histone H2A (133 aa).

Over residues 1–10 (MTGGKSGGKA) the composition is skewed to gly residues. The tract at residues 1–25 (MTGGKSGGKASGSKSSQSRSSKAGL) is disordered. Residues Lys-5 and Lys-9 each carry the N6-acetyllysine modification. Over residues 11–24 (SGSKSSQSRSSKAG) the composition is skewed to low complexity. At Gln-106 the chain carries N5-methylglutamine. At Ser-130 the chain carries Phosphoserine. The [ST]-Q motif signature appears at 130-131 (SQ).

Belongs to the histone H2A family. In terms of assembly, the nucleosome is a histone octamer containing two molecules each of H2A, H2B, H3 and H4 assembled in one H3-H4 heterotetramer and two H2A-H2B heterodimers. The octamer wraps approximately 147 bp of DNA. Post-translationally, phosphorylated to form H2AS128ph (gamma-H2A) in response to DNA double-strand breaks (DSBs) generated by exogenous genotoxic agents and by stalled replication forks. Phosphorylation is dependent on the DNA damage checkpoint kinases MEC1/ATR and TEL1/ATM, spreads on either side of a detected DSB site and may mark the surrounding chromatin for recruitment of proteins required for DNA damage signaling and repair. Gamma-H2A is removed from the DNA prior to the strand invasion-primer extension step of the repair process and subsequently dephosphorylated. Dephosphorylation is necessary for efficient recovery from the DNA damage checkpoint. In terms of processing, acetylated by ESA1 to form H2AK4ac and H2AK7ac.

It is found in the nucleus. The protein resides in the chromosome. Its function is as follows. Core component of nucleosome which plays a central role in DNA double strand break (DSB) repair. Nucleosomes wrap and compact DNA into chromatin, limiting DNA accessibility to the cellular machineries which require DNA as a template. Histones thereby play a central role in transcription regulation, DNA repair, DNA replication and chromosomal stability. DNA accessibility is regulated via a complex set of post-translational modifications of histones, also called histone code, and nucleosome remodeling. This Coccidioides immitis (strain RS) (Valley fever fungus) protein is Histone H2A (HTA1).